Reading from the N-terminus, the 67-residue chain is Conotoxin TxMMSK-01 (67 aa).

A signal peptide spans 1 to 20 (MMSKLGVLLITCLLLFPLTA). The propeptide occupies 21–53 (VPLDGDQPADQPAERLQDDISSENHPFFDPVKR). 3 disulfide bridges follow: Cys54-Cys66, Cys55-Cys62, and Cys59-Cys65. Pro64 carries the 4-hydroxyproline modification. A Cysteine amide modification is found at Cys66.

Belongs to the conotoxin M superfamily. As to expression, expressed by the venom duct.

The protein localises to the secreted. The protein is Conotoxin TxMMSK-01 of Conus textile (Cloth-of-gold cone).